A 105-amino-acid chain; its full sequence is Large ribosomal subunit protein eL36 (105 aa).

Position 62 is an N6-acetyllysine (lysine 62).

This sequence belongs to the eukaryotic ribosomal protein eL36 family. Component of the large ribosomal subunit.

It localises to the cytoplasm. Its subcellular location is the cytosol. In terms of biological role, component of the large ribosomal subunit. The ribosome is a large ribonucleoprotein complex responsible for the synthesis of proteins in the cell. This chain is Large ribosomal subunit protein eL36 (Rpl36), found in Rattus norvegicus (Rat).